The sequence spans 102 residues: Small ribosomal subunit protein uS10 (102 aa).

This sequence belongs to the universal ribosomal protein uS10 family. Part of the 30S ribosomal subunit.

In terms of biological role, involved in the binding of tRNA to the ribosomes. This is Small ribosomal subunit protein uS10 from Beijerinckia indica subsp. indica (strain ATCC 9039 / DSM 1715 / NCIMB 8712).